The following is an 83-amino-acid chain: Small ribosomal subunit protein bS16 (83 aa).

The protein belongs to the bacterial ribosomal protein bS16 family.

This is Small ribosomal subunit protein bS16 from Shewanella halifaxensis (strain HAW-EB4).